A 483-amino-acid polypeptide reads, in one-letter code: Probable gamma-aminobutyrate transaminase 4 (483 aa).

138–139 (GS) contacts pyridoxal 5'-phosphate. A substrate-binding site is contributed by Y171. D278 lines the pyridoxal 5'-phosphate pocket. K307 serves as a coordination point for substrate. The residue at position 307 (K307) is an N6-(pyridoxal phosphate)lysine.

It belongs to the class-III pyridoxal-phosphate-dependent aminotransferase family. Not detected in roots, stems, flowers or leaves of healthy plants.

The protein resides in the cytoplasm. It catalyses the reaction 4-aminobutanoate + pyruvate = succinate semialdehyde + L-alanine. The catalysed reaction is 4-aminobutanoate + glyoxylate = succinate semialdehyde + glycine. Transaminase that degrades gamma-amino butyric acid (GABA). The polypeptide is Probable gamma-aminobutyrate transaminase 4 (GABA-T) (Oryza sativa subsp. japonica (Rice)).